The chain runs to 215 residues: Cytochrome b6 (215 aa).

Residues isoleucine 32–phenylalanine 52 form a helical membrane-spanning segment. Cysteine 35 contacts heme c. Heme b contacts are provided by histidine 86 and histidine 100. The next 3 helical transmembrane spans lie at alanine 90–phenylalanine 110, leucine 116–tyrosine 136, and leucine 186–isoleucine 206. Residues histidine 187 and histidine 202 each contribute to the heme b site.

It belongs to the cytochrome b family. PetB subfamily. As to quaternary structure, the 4 large subunits of the cytochrome b6-f complex are cytochrome b6, subunit IV (17 kDa polypeptide, PetD), cytochrome f and the Rieske protein, while the 4 small subunits are PetG, PetL, PetM and PetN. The complex functions as a dimer. Heme b is required as a cofactor. The cofactor is heme c.

It is found in the plastid. The protein resides in the chloroplast thylakoid membrane. Its function is as follows. Component of the cytochrome b6-f complex, which mediates electron transfer between photosystem II (PSII) and photosystem I (PSI), cyclic electron flow around PSI, and state transitions. This is Cytochrome b6 from Psilotum nudum (Whisk fern).